We begin with the raw amino-acid sequence, 156 residues long: RNA polymerase sigma factor SigS (156 aa).

Residues 29–44 carry the Polymerase core binding motif; sequence EYYQLLLIKMWQLSQI. The segment at residues 126–145 is a DNA-binding region (H-T-H motif); that stretch reads QFEIAEIMSLSLSTIKLIKM.

It belongs to the sigma-70 factor family.

Functionally, sigma factors are initiation factors that promote the attachment of RNA polymerase to specific initiation sites and are then released. Sigma-S contributes to the protection against external stress, thus playing a role in cellular fitness and survival. In Staphylococcus aureus (strain Mu50 / ATCC 700699), this protein is RNA polymerase sigma factor SigS (sigS).